The following is a 385-amino-acid chain: Signal transduction histidine-protein kinase/phosphatase DegS (385 aa).

A coiled-coil region spans residues glutamine 31–glutamine 141. At serine 76 the chain carries Phosphoserine. Residues arginine 183–leucine 385 enclose the Histidine kinase domain. The residue at position 189 (histidine 189) is a Phosphohistidine; by autocatalysis.

Post-translationally, autophosphorylated. Phosphorylated in vitro at Ser-76 by the serine/threonine-protein kinase YbdM, which stimulates the phosphate transfer to DegU.

Its subcellular location is the cytoplasm. It carries out the reaction ATP + protein L-histidine = ADP + protein N-phospho-L-histidine.. Its activity is regulated as follows. Regulated via serine phosphorylation of its input domain. Phosphotransfer from DegS to DegU is stimulated by phosphorylation on Ser-76 and by DegQ. Its function is as follows. Member of the two-component regulatory system DegS/DegU, which plays an important role in the transition growth phase. Involved in the control of expression of different cellular functions, including production of degradative enzymes such as the neutral and alkaline proteases, flagellum formation and biofilm formation. Acts both as a protein kinase that undergoes autophosphorylation and subsequently transfers the phosphate to DegU, and as a protein phosphatase that dephosphorylates phospho-DegU. This is Signal transduction histidine-protein kinase/phosphatase DegS (degS) from Bacillus subtilis (strain 168).